We begin with the raw amino-acid sequence, 125 residues long: Ribonuclease P protein component (125 aa).

This sequence belongs to the RnpA family. In terms of assembly, consists of a catalytic RNA component (M1 or rnpB) and a protein subunit.

It carries out the reaction Endonucleolytic cleavage of RNA, removing 5'-extranucleotides from tRNA precursor.. Functionally, RNaseP catalyzes the removal of the 5'-leader sequence from pre-tRNA to produce the mature 5'-terminus. It can also cleave other RNA substrates such as 4.5S RNA. The protein component plays an auxiliary but essential role in vivo by binding to the 5'-leader sequence and broadening the substrate specificity of the ribozyme. This Clostridium botulinum (strain Eklund 17B / Type B) protein is Ribonuclease P protein component.